Here is a 184-residue protein sequence, read N- to C-terminus: Ribosome-recycling factor (184 aa).

Belongs to the RRF family.

It localises to the cytoplasm. Responsible for the release of ribosomes from messenger RNA at the termination of protein biosynthesis. May increase the efficiency of translation by recycling ribosomes from one round of translation to another. The polypeptide is Ribosome-recycling factor (Fervidobacterium nodosum (strain ATCC 35602 / DSM 5306 / Rt17-B1)).